Reading from the N-terminus, the 180-residue chain is Peptidyl-tRNA hydrolase (180 aa).

Position 15 (tyrosine 15) interacts with tRNA. Residue histidine 20 is the Proton acceptor of the active site. Positions 67, 69, and 115 each coordinate tRNA.

It belongs to the PTH family. Monomer.

The protein resides in the cytoplasm. The catalysed reaction is an N-acyl-L-alpha-aminoacyl-tRNA + H2O = an N-acyl-L-amino acid + a tRNA + H(+). In terms of biological role, hydrolyzes ribosome-free peptidyl-tRNAs (with 1 or more amino acids incorporated), which drop off the ribosome during protein synthesis, or as a result of ribosome stalling. Catalyzes the release of premature peptidyl moieties from peptidyl-tRNA molecules trapped in stalled 50S ribosomal subunits, and thus maintains levels of free tRNAs and 50S ribosomes. In Chlamydia pneumoniae (Chlamydophila pneumoniae), this protein is Peptidyl-tRNA hydrolase.